The primary structure comprises 721 residues: Catalase-peroxidase (721 aa).

The segment at residues 95–223 is a cross-link (tryptophyl-tyrosyl-methioninium (Trp-Tyr) (with M-249)); the sequence is WHSAGSYRLF…LGAVHMGLIY (129 aa). The active-site Proton acceptor is the His96. The segment at residues 223 to 249 is a cross-link (tryptophyl-tyrosyl-methioninium (Tyr-Met) (with W-95)); it reads YVNPQGRDGKPDPLKSAHDVRVTFKRM. Position 264 (His264) interacts with heme b.

It belongs to the peroxidase family. Peroxidase/catalase subfamily. In terms of assembly, homodimer or homotetramer. Heme b serves as cofactor. Formation of the three residue Trp-Tyr-Met cross-link is important for the catalase, but not the peroxidase activity of the enzyme.

The enzyme catalyses H2O2 + AH2 = A + 2 H2O. The catalysed reaction is 2 H2O2 = O2 + 2 H2O. Functionally, bifunctional enzyme with both catalase and broad-spectrum peroxidase activity. This is Catalase-peroxidase from Parvibaculum lavamentivorans (strain DS-1 / DSM 13023 / NCIMB 13966).